The sequence spans 647 residues: Starch synthase 1, chloroplastic/amyloplastic (647 aa).

The transit peptide at 1–41 (MAATGVGAGCLAPSVRLRADPATAARASACVVRARLRRVAR) directs the protein to the chloroplast. Residues 66–91 (PLVPGFLAPPPPAPAQSPAPTQPPLP) are compositionally biased toward pro residues. Residues 66–95 (PLVPGFLAPPPPAPAQSPAPTQPPLPDAGV) form a disordered region. K153 serves as a coordination point for ADP-alpha-D-glucose.

It belongs to the glycosyltransferase 1 family. Bacterial/plant glycogen synthase subfamily.

It localises to the plastid. It is found in the chloroplast. The protein localises to the amyloplast. The enzyme catalyses [(1-&gt;4)-alpha-D-glucosyl](n) + ADP-alpha-D-glucose = [(1-&gt;4)-alpha-D-glucosyl](n+1) + ADP + H(+). Its pathway is glycan biosynthesis; starch biosynthesis. The sequence is that of Starch synthase 1, chloroplastic/amyloplastic (WSSI-2) from Triticum aestivum (Wheat).